We begin with the raw amino-acid sequence, 704 residues long: Meprin A subunit beta (704 aa).

Residues 1 to 20 (MDARHQPWFLVFATFLLVSG) form the signal peptide. The propeptide occupies 21-64 (LPAPEKFVKDIDGGIDQDIFDINQGLGLDLFEGDIKLEANGKNS). The Extracellular segment spans residues 21 to 654 (LPAPEKFVKD…RCEKRGSTRD (634 aa)). The Peptidase M12A domain occupies 63-257 (NSIIGDHKRW…LKLNQLYNCT (195 aa)). 3 cysteine pairs are disulfide-bonded: Cys-104/Cys-256, Cys-125/Cys-145, and Cys-266/Cys-428. His-153 contacts Zn(2+). Glu-154 is an active-site residue. 2 residues coordinate Zn(2+): His-157 and His-163. Asn-193, Asn-219, Asn-255, Asn-316, Asn-422, Asn-437, Asn-529, Asn-548, and Asn-593 each carry an N-linked (GlcNAc...) asparagine glycan. The MAM domain maps to 261–430 (SFMDSCDFEL…INLSETRCPH (170 aa)). Residues 431-586 (HIWHIQNFTQ…GDDIYILLTV (156 aa)) form the MATH domain. Positions 607 to 647 (VHNACSEVVCQNGGICVVQDGRAECKCPAGEDWWYMGKRCE) constitute an EGF-like domain. 3 cysteine pairs are disulfide-bonded: Cys-611–Cys-622, Cys-616–Cys-631, and Cys-633–Cys-646. Residues 655–678 (TVIIAVSSTVTVFAVMLIITLVSV) form a helical membrane-spanning segment. At 679–704 (YCTRRKYRKKARANTAAMTLENQHAF) the chain is on the cytoplasmic side. At Thr-697 the chain carries Phosphothreonine.

Homotetramer consisting of disulfide-linked beta subunits, or heterotetramer of two alpha and two beta subunits formed by non-covalent association of two disulfide-linked heterodimers. Interacts with MBL2 through its carbohydrate moiety. This interaction may inhibit its catalytic activity. Interacts with TSPAN8. The cofactor is Zn(2+). Post-translationally, proteolytically activated by trypsin in the intestinal lumen and kallikrein-related peptidases in other tissues. N-glycosylated; contains high mannose and/or complex biantennary structures. In terms of processing, phosphorylated by PKC at multiple sites of its cytoplasmic part. Phosphorylation dcreases activity at the cell surface, leading to diminished substrate cleavage. Isoform 1 is expressed in kidney, intestinal brush borders, and salivary ducts. Isoform 2 has been found in carcinoma cells.

It is found in the cell membrane. Its subcellular location is the secreted. It catalyses the reaction Hydrolysis of proteins, including azocasein, and peptides. Hydrolysis of 5-His-|-Leu-6, 6-Leu-|-Cys-7, 14-Ala-|-Leu-15 and 19-Cys-|-Gly-20 bonds in insulin B chain.. With respect to regulation, strongly inhibited by fetuin-A/AHSG. Inhibited by cysteine and by the metal ion chelators EDTA and 1,10-phenanthroline. Not inhibited by 3,4-dichloroisocourmarin, soybean trypsin inhibitor, or the cysteine proteinase inhibitors iodoacetic acid and E-64. Membrane metallopeptidase that sheds many membrane-bound proteins. Exhibits a strong preference for acidic amino acids at the P1' position. Known substrates include: FGF19, VGFA, IL1B, IL18, procollagen I and III, E-cadherin, KLK7, gastrin, ADAM10, tenascin-C. The presence of several pro-inflammatory cytokine among substrates implicate MEP1B in inflammation. It is also involved in tissue remodeling due to its capability to degrade extracellular matrix components. The protein is Meprin A subunit beta (Mep1b) of Mus musculus (Mouse).